A 223-amino-acid chain; its full sequence is Translation initiation factor 6 (223 aa).

This sequence belongs to the eIF-6 family.

Functionally, binds to the 50S ribosomal subunit and prevents its association with the 30S ribosomal subunit to form the 70S initiation complex. In Thermofilum pendens (strain DSM 2475 / Hrk 5), this protein is Translation initiation factor 6.